A 503-amino-acid chain; its full sequence is Probable cytochrome P450 303a1 (503 aa).

A heme-binding site is contributed by Cys-448.

Belongs to the cytochrome P450 family. Heme serves as cofactor.

The protein localises to the endoplasmic reticulum membrane. It is found in the microsome membrane. In terms of biological role, may be involved in the metabolism of insect hormones and in the breakdown of synthetic insecticides. This Drosophila melanogaster (Fruit fly) protein is Probable cytochrome P450 303a1 (Cyp303a1).